The primary structure comprises 69 residues: Cold shock protein CapB (69 aa).

The 60-residue stretch at 7-66 folds into the CSD domain; sequence GTVKWFNDEKGFGFITPQSGDDLFVHFKAIQSDGFKSLKEGQQVSFIATRGQKGMQAEEV.

Its subcellular location is the cytoplasm. Its function is as follows. Affects cell viability at low temperatures. This chain is Cold shock protein CapB (capB), found in Pseudomonas fragi.